A 215-amino-acid chain; its full sequence is Elongation factor Ts (215 aa).

The involved in Mg(2+) ion dislocation from EF-Tu stretch occupies residues 80-83; sequence TDFA.

Belongs to the EF-Ts family.

The protein localises to the cytoplasm. Its function is as follows. Associates with the EF-Tu.GDP complex and induces the exchange of GDP to GTP. It remains bound to the aminoacyl-tRNA.EF-Tu.GTP complex up to the GTP hydrolysis stage on the ribosome. The sequence is that of Elongation factor Ts from Acetivibrio thermocellus (strain ATCC 27405 / DSM 1237 / JCM 9322 / NBRC 103400 / NCIMB 10682 / NRRL B-4536 / VPI 7372) (Clostridium thermocellum).